We begin with the raw amino-acid sequence, 570 residues long: Low-affinity glucose transporter HXT1 (570 aa).

The segment covering 1–20 (MNSTPDLISPQKSNSSNSYE) has biased composition (polar residues). A disordered region spans residues 1 to 51 (MNSTPDLISPQKSNSSNSYELESGRSKAMNTPEGKNESFHDNLSESQVQPA). Topologically, residues 1–60 (MNSTPDLISPQKSNSSNSYELESGRSKAMNTPEGKNESFHDNLSESQVQPAVAPPNTGKG) are cytoplasmic. Phosphoserine occurs at positions 23, 38, and 44. Residues 34 to 43 (GKNESFHDNL) show a composition bias toward basic and acidic residues. The chain crosses the membrane as a helical span at residues 61 to 81 (VYVTVSICCVMVAFGGFIFGW). At 82-116 (DTGTISGFVAQTDFLRRFGMKHHDGSHYLSKVRTG) the chain is on the extracellular side. Residues 117-137 (LIVSIFNIGCAIGGIVLAKLG) traverse the membrane as a helical segment. Residues 138–143 (DMYGRR) lie on the Cytoplasmic side of the membrane. A helical membrane pass occupies residues 144 to 164 (IGLIVVVVIYTIGIIIQIASI). At 165-174 (NKWYQYFIGR) the chain is on the extracellular side. The helical transmembrane segment at 175 to 195 (IISGLGVGGITVLSPMLISEV) threads the bilayer. Topologically, residues 196-201 (APSEMR) are cytoplasmic. The chain crosses the membrane as a helical span at residues 202-222 (GTLVSCYQVMITLGIFLGYCT). The Extracellular segment spans residues 223–236 (NFGTKNYSNSVQWR). Asparagine 228 carries N-linked (GlcNAc...) asparagine glycosylation. A helical transmembrane segment spans residues 237–257 (VPLGLCFAWALFMIGGMMFVP). Over 258-340 (ESPRYLVEAG…IQSLQQLTGD (83 aa)) the chain is Cytoplasmic. Residues 341-357 (NYFFYYGTIVFQAVGLS) form a helical membrane-spanning segment. Topologically, residues 358-363 (DSFETS) are extracellular. Residues 364–381 (IVFGVVNFFSTCCSLYTV) traverse the membrane as a helical segment. The Cytoplasmic portion of the chain corresponds to 382–388 (DRFGRRN). A helical transmembrane segment spans residues 389-409 (CLMWGAVGMVCCYVVYASVGV). Residues 410–431 (TRLWPNGQDQPSSKGAGNCMIV) lie on the Extracellular side of the membrane. Residues 432–452 (FACFYIFCFATTWAPIAYVVI) traverse the membrane as a helical segment. At 453–469 (SECFPLRVKSKCMSIAS) the chain is on the cytoplasmic side. A helical transmembrane segment spans residues 470 to 490 (AANWIWGFLISFFTPFITGAI). Asparagine 491 is a topological domain (extracellular). The chain crosses the membrane as a helical span at residues 492 to 512 (FYYGYVFMGCMVFAYFYVFFF). The Cytoplasmic portion of the chain corresponds to 513–570 (VPETKGLSLEEVNDMYAEGVLPWKSASWVPVSKRGADYNADDLMHDDQPFYKSLFSRK).

It belongs to the major facilitator superfamily. Sugar transporter (TC 2.A.1.1) family.

The protein resides in the membrane. In terms of biological role, low-affinity glucose transporter. HXT1 is as well involved in the transport of mannose. This is Low-affinity glucose transporter HXT1 (HXT1) from Saccharomyces cerevisiae (strain ATCC 204508 / S288c) (Baker's yeast).